The chain runs to 616 residues: Replication protein A 70 kDa DNA-binding subunit (616 aa).

The residue at position 1 (M1) is an N-acetylmethionine. Glycyl lysine isopeptide (Lys-Gly) (interchain with G-Cter in ubiquitin) cross-links involve residues K22 and K88. The tract at residues G121–T154 is disordered. The segment covering A134 to Q145 has biased composition (low complexity). Residues K163 and K167 each carry the N6-acetyllysine; alternate modification. Glycyl lysine isopeptide (Lys-Gly) (interchain with G-Cter in ubiquitin); alternate cross-links involve residues K163 and K167. T180 bears the Phosphothreonine mark. K183 is covalently cross-linked (Glycyl lysine isopeptide (Lys-Gly) (interchain with G-Cter in ubiquitin)). T191 bears the Phosphothreonine mark. Residues W197–N281 constitute a DNA-binding region (OB). Glycyl lysine isopeptide (Lys-Gly) (interchain with G-Cter in ubiquitin) cross-links involve residues K220 and K244. The residue at position 259 (K259) is an N6-acetyllysine; alternate. Residue K259 forms a Glycyl lysine isopeptide (Lys-Gly) (interchain with G-Cter in ubiquitin); alternate linkage. Glycyl lysine isopeptide (Lys-Gly) (interchain with G-Cter in ubiquitin) cross-links involve residues K267 and K331. S384 bears the Phosphoserine mark. Residues K410 and K431 each participate in a glycyl lysine isopeptide (Lys-Gly) (interchain with G-Cter in ubiquitin) cross-link. K449 is covalently cross-linked (Glycyl lysine isopeptide (Lys-Gly) (interchain with G-Cter in SUMO)). K458 is covalently cross-linked (Glycyl lysine isopeptide (Lys-Gly) (interchain with G-Cter in ubiquitin)). Residues C481–C503 form a C4-type zinc finger. K553 is covalently cross-linked (Glycyl lysine isopeptide (Lys-Gly) (interchain with G-Cter in ubiquitin)). A Glycyl lysine isopeptide (Lys-Gly) (interchain with G-Cter in SUMO) cross-link involves residue K577.

This sequence belongs to the replication factor A protein 1 family. As to quaternary structure, component of the canonical replication protein A complex (RPA), a heterotrimer composed of RPA1, RPA2 and RPA3. Also a component of the aRPA, the alternative replication protein A complex, a trimeric complex similar to the replication protein A complex/RPA but where RPA1 and RPA3 are associated with RPA4 instead of RPA2. The DNA-binding activity may reside exclusively on the RPA1 subunit. Interacts with PRPF19; the PRP19-CDC5L complex is recruited to the sites of DNA repair where it ubiquitinates the replication protein A complex (RPA). Interacts with RIPK1. Interacts with the polymerase alpha subunit POLA1/p180; this interaction stabilizes the replicative complex and reduces the misincorporation rate of DNA polymerase alpha by acting as a fidelity clamp. Interacts with RAD51 and SENP6 to regulate DNA repair. Interacts with HELB; this interaction promotes HELB recruitment to chromatin following DNA damage. Interacts with PRIMPOL; leading to recruit PRIMPOL on chromatin and stimulate its DNA primase activity. Interacts with XPA; the interaction is direct and associates XPA with the RPA complex. Interacts with ETAA1; the interaction is direct and promotes ETAA1 recruitment at stalled replication forks. Interacts with RPA1; this interaction associates HROB with the RPA complex. Interacts (when poly-ADP-ribosylated) with HTATSF1. Interacts with BRIP1/FANCJ via this RPA1 subunit; following DNA damage they colocalize in foci in the nucleus. In terms of processing, DNA damage-induced 'Lys-63'-linked polyubiquitination by PRPF19 mediates ATRIP recruitment to the RPA complex at sites of DNA damage and activation of ATR. Ubiquitinated by RFWD3 at stalled replication forks in response to DNA damage: ubiquitination by RFWD3 does not lead to degradation by the proteasome and promotes removal of the RPA complex from stalled replication forks, promoting homologous recombination. Post-translationally, sumoylated on lysine residues Lys-449 and Lys-577, with Lys-449 being the major site. Sumoylation promotes recruitment of RAD51 to the DNA damage foci to initiate DNA repair through homologous recombination. Desumoylated by SENP6. Poly-ADP-ribosylated by PARP1; promoting recruitment of HTATSF1.

It is found in the nucleus. Its subcellular location is the PML body. Its function is as follows. As part of the heterotrimeric replication protein A complex (RPA/RP-A), binds and stabilizes single-stranded DNA intermediates that form during DNA replication or upon DNA stress. It prevents their reannealing and in parallel, recruits and activates different proteins and complexes involved in DNA metabolism. Thereby, it plays an essential role both in DNA replication and the cellular response to DNA damage. In the cellular response to DNA damage, the RPA complex controls DNA repair and DNA damage checkpoint activation. Through recruitment of ATRIP activates the ATR kinase a master regulator of the DNA damage response. It is required for the recruitment of the DNA double-strand break repair factors RAD51 and RAD52 to chromatin in response to DNA damage. Also recruits to sites of DNA damage proteins like XPA and XPG that are involved in nucleotide excision repair and is required for this mechanism of DNA repair. Also plays a role in base excision repair (BER) probably through interaction with UNG. Also recruits SMARCAL1/HARP, which is involved in replication fork restart, to sites of DNA damage. Plays a role in telomere maintenance. As part of the alternative replication protein A complex, aRPA, binds single-stranded DNA and probably plays a role in DNA repair. Compared to the RPA2-containing, canonical RPA complex, may not support chromosomal DNA replication and cell cycle progression through S-phase. The aRPA may not promote efficient priming by DNA polymerase alpha but could support DNA synthesis by polymerase delta in presence of PCNA and replication factor C (RFC), the dual incision/excision reaction of nucleotide excision repair and RAD51-dependent strand exchange. RPA stimulates 5'-3' helicase activity of the BRIP1/FANCJ. This is Replication protein A 70 kDa DNA-binding subunit (RPA1) from Homo sapiens (Human).